The sequence spans 493 residues: Xaa-Pro dipeptidase (493 aa).

N-acetylalanine is present on Ala2. Ser167 is modified (phosphoserine). Position 255 (His255) interacts with a dipeptide. Residues Asp276, Asp287, and His370 each coordinate Mn(2+). Residue Asp287 participates in a dipeptide binding. Residues His377 and Arg398 each coordinate a dipeptide. Mn(2+)-binding residues include Glu412 and Glu452.

It belongs to the peptidase M24B family. Eukaryotic-type prolidase subfamily. As to quaternary structure, homodimer. Requires Mn(2+) as cofactor.

It carries out the reaction Xaa-L-Pro dipeptide + H2O = an L-alpha-amino acid + L-proline. In terms of biological role, dipeptidase that catalyzes the hydrolysis of dipeptides with a prolyl (Xaa-Pro) or hydroxyprolyl residue in the C-terminal position. The preferred dipeptide substrate is Gly-Pro, but other Xaa-Pro dipeptides, such as Ala-Pro, Met-Pro, Phe-Pro, Val-Pro and Leu-Pro, can be cleaved. Plays an important role in collagen metabolism because the high level of iminoacids in collagen. This chain is Xaa-Pro dipeptidase (PEPD), found in Pongo abelii (Sumatran orangutan).